Here is a 312-residue protein sequence, read N- to C-terminus: 1-(5-phosphoribosyl)-5-[(5-phosphoribosylamino)methylideneamino] imidazole-4-carboxamide isomerase HISN3, chloroplastic (312 aa).

The N-terminal 67 residues, 1–67 (MRSPASTPSI…IHKGKVKQIV (67 aa)), are a transit peptide targeting the chloroplast. Residue aspartate 57 participates in 1-(5-phospho-beta-D-ribosyl)-5-[(5-phospho-beta-D-ribosylamino)methylideneamino]imidazole-4-carboxamide binding. A 5-[(5-phospho-1-deoxy-D-ribulos-1-ylimino)methylamino]-1-(5-phospho-beta-D-ribosyl)imidazole-4-carboxamide-binding site is contributed by glutamine 65. Na(+) contacts are provided by glutamine 65 and isoleucine 66. Glycine 68 contacts 1-(5-phospho-beta-D-ribosyl)-5-[(5-phospho-beta-D-ribosylamino)methylideneamino]imidazole-4-carboxamide. 5-[(5-phospho-1-deoxy-D-ribulos-1-ylimino)methylamino]-1-(5-phospho-beta-D-ribosyl)imidazole-4-carboxamide is bound by residues histidine 108, glycine 138, threonine 158, and serine 159. 3 residues coordinate 1-(5-phospho-beta-D-ribosyl)-5-[(5-phospho-beta-D-ribosylamino)methylideneamino]imidazole-4-carboxamide: glycine 138, threonine 158, and serine 159. Na(+) is bound by residues serine 159 and phenylalanine 162. 1-(5-phospho-beta-D-ribosyl)-5-[(5-phospho-beta-D-ribosylamino)methylideneamino]imidazole-4-carboxamide contacts are provided by aspartate 187, arginine 203, tryptophan 204, and histidine 230. Residue aspartate 187 participates in 5-[(5-phospho-1-deoxy-D-ribulos-1-ylimino)methylamino]-1-(5-phospho-beta-D-ribosyl)imidazole-4-carboxamide binding. Tryptophan 204 contributes to the 5-[(5-phospho-1-deoxy-D-ribulos-1-ylimino)methylamino]-1-(5-phospho-beta-D-ribosyl)imidazole-4-carboxamide binding site. Glutamate 235 is a Na(+) binding site. Glycine 236, glycine 262, glycine 285, and serine 286 together coordinate 1-(5-phospho-beta-D-ribosyl)-5-[(5-phospho-beta-D-ribosylamino)methylideneamino]imidazole-4-carboxamide. 5-[(5-phospho-1-deoxy-D-ribulos-1-ylimino)methylamino]-1-(5-phospho-beta-D-ribosyl)imidazole-4-carboxamide is bound by residues glycine 236, glycine 262, glycine 285, and serine 286.

Belongs to the HisA/HisF family. Requires Na(+) as cofactor.

It localises to the plastid. Its subcellular location is the chloroplast. It catalyses the reaction 1-(5-phospho-beta-D-ribosyl)-5-[(5-phospho-beta-D-ribosylamino)methylideneamino]imidazole-4-carboxamide = 5-[(5-phospho-1-deoxy-D-ribulos-1-ylimino)methylamino]-1-(5-phospho-beta-D-ribosyl)imidazole-4-carboxamide. The protein operates within amino-acid biosynthesis; L-histidine biosynthesis; L-histidine from 5-phospho-alpha-D-ribose 1-diphosphate: step 4/9. In terms of biological role, component of the histidine biosynthesis pathway that catalyzes the isomerization of 5'-ProFAR (pro-phosphoribosyl formimino-5-aminoimidazole-4-carboxamide ribonucleotide, referred as 1-(5-phospho-beta-D-ribosyl)-5-[(5-phospho-beta-D-ribosylamino)methylideneamino]imidazole-4-carboxamide) to PrFAR (phosphoribulosyl formimino-5-aminoimidazole-4-carboxamide ribonucleotide, referred as 5-[(5-phospho-1-deoxy-D-ribulos-1-ylimino)methylamino]-1-(5-phospho-beta-D-ribosyl)imidazole-4-carboxamide). This chain is 1-(5-phosphoribosyl)-5-[(5-phosphoribosylamino)methylideneamino] imidazole-4-carboxamide isomerase HISN3, chloroplastic, found in Medicago truncatula (Barrel medic).